Reading from the N-terminus, the 400-residue chain is Enoyl-[acyl-carrier-protein] reductase [NADH] (400 aa).

Residues 48–53, 74–75, 111–112, and 139–140 each bind NAD(+); these read GASTGY, FE, DA, and LA. Tyrosine 225 contributes to the substrate binding site. The Proton donor role is filled by tyrosine 235. Residues lysine 244 and 273–275 contribute to the NAD(+) site; that span reads VVT.

Belongs to the TER reductase family. As to quaternary structure, monomer.

The catalysed reaction is a 2,3-saturated acyl-[ACP] + NAD(+) = a (2E)-enoyl-[ACP] + NADH + H(+). The protein operates within lipid metabolism; fatty acid biosynthesis. Its function is as follows. Involved in the final reduction of the elongation cycle of fatty acid synthesis (FAS II). Catalyzes the reduction of a carbon-carbon double bond in an enoyl moiety that is covalently linked to an acyl carrier protein (ACP). This Burkholderia cenocepacia (strain HI2424) protein is Enoyl-[acyl-carrier-protein] reductase [NADH].